A 266-amino-acid chain; its full sequence is 5'-nucleotidase SurE (266 aa).

A divalent metal cation is bound by residues aspartate 8, aspartate 9, serine 39, and asparagine 93.

This sequence belongs to the SurE nucleotidase family. A divalent metal cation is required as a cofactor.

It localises to the cytoplasm. The catalysed reaction is a ribonucleoside 5'-phosphate + H2O = a ribonucleoside + phosphate. In terms of biological role, nucleotidase that shows phosphatase activity on nucleoside 5'-monophosphates. This Pyrobaculum arsenaticum (strain DSM 13514 / JCM 11321 / PZ6) protein is 5'-nucleotidase SurE.